Reading from the N-terminus, the 797-residue chain is Inactive dipeptidyl peptidase 10 (797 aa).

The disordered stretch occupies residues 1 to 28 (MKQEQQPTPGARATQSQPADQELGSNSP). Topologically, residues 1–34 (MKQEQQPTPGARATQSQPADQELGSNSPPQRNWK) are cytoplasmic. A helical; Signal-anchor for type II membrane protein transmembrane segment spans residues 35–55 (GIAIALLVILVVCSLITMSVI). Topologically, residues 56–797 (LLTPDELTNS…VLPQEPEEDE (742 aa)) are extracellular. N-linked (GlcNAc...) asparagine glycans are attached at residues Asn-64, Asn-91, Asn-112, and Asn-120. Residues Tyr-139 and Tyr-144 each carry the phosphotyrosine modification. 4 N-linked (GlcNAc...) asparagine glycosylation sites follow: Asn-258, Asn-343, Asn-518, and Asn-749.

This sequence belongs to the peptidase S9B family. DPPIV subfamily. As to quaternary structure, may form oligomers. Interacts with KCND1 and KCND2. N-glycosylation is important for cell surface expression, specially at Asn-258, which is crucial. As to expression, detected in brain cortex (at protein level). Expressed in the brain, predominantly by neurons and not by glia.

The protein resides in the cell membrane. Promotes cell surface expression of the potassium channel KCND2. Modulates the activity and gating characteristics of the potassium channel KCND2. Has no dipeptidyl aminopeptidase activity. This Mus musculus (Mouse) protein is Inactive dipeptidyl peptidase 10 (Dpp10).